A 208-amino-acid polypeptide reads, in one-letter code: Large ribosomal subunit protein uL4 (208 aa).

The interval 44 to 79 (QRQGTHKSKERSEISGSTRKLGRQKGGGGARRGDIN) is disordered.

The protein belongs to the universal ribosomal protein uL4 family. In terms of assembly, part of the 50S ribosomal subunit.

Its function is as follows. One of the primary rRNA binding proteins, this protein initially binds near the 5'-end of the 23S rRNA. It is important during the early stages of 50S assembly. It makes multiple contacts with different domains of the 23S rRNA in the assembled 50S subunit and ribosome. Forms part of the polypeptide exit tunnel. This chain is Large ribosomal subunit protein uL4, found in Phocaeicola vulgatus (strain ATCC 8482 / DSM 1447 / JCM 5826 / CCUG 4940 / NBRC 14291 / NCTC 11154) (Bacteroides vulgatus).